A 317-amino-acid chain; its full sequence is Protoheme IX farnesyltransferase (317 aa).

The next 9 helical transmembrane spans lie at 39-58 (VMSL…PGSL), 62-84 (LGAI…NMWY), 100-120 (IPAG…LAVG), 123-143 (LVMW…AIFF), 160-180 (IVIG…AVTG), 184-204 (LMPV…FWSL), 233-253 (IMAY…LGDT), 256-276 (VYGL…WRVL), and 293-313 (ARAA…ALAV).

This sequence belongs to the UbiA prenyltransferase family. Protoheme IX farnesyltransferase subfamily.

The protein resides in the cell inner membrane. It catalyses the reaction heme b + (2E,6E)-farnesyl diphosphate + H2O = Fe(II)-heme o + diphosphate. Its pathway is porphyrin-containing compound metabolism; heme O biosynthesis; heme O from protoheme: step 1/1. In terms of biological role, converts heme B (protoheme IX) to heme O by substitution of the vinyl group on carbon 2 of heme B porphyrin ring with a hydroxyethyl farnesyl side group. In Granulibacter bethesdensis (strain ATCC BAA-1260 / CGDNIH1), this protein is Protoheme IX farnesyltransferase.